The sequence spans 379 residues: MTPPHNYLAVIKVVGIGGGGVNAVNRMIEQGLKGVEFMAINTDAQALLMSDADVKLDVGRDSTRGLGAGADPEVGRKAAEDAKDEIEELLRGADMVFVTAGEGGGTGTGGAPVIASIARKLGALTVGVVTRPFSFEGKRRSNQAENGIAALRESCDTLIVIPNDRLLQMGDTAVSLMDAFRSADEVLLNGVQGITDLITTPGLINVDFADVKGIMSGAGTALMGIGSARGDGRSLKAAEIAINSPLLEASMEGAQGVLMSIAGGSDLGLFEINEAASLVQDAAHPDANIIFGTVIDDSLGDEVRVTVIAAGFEANGPGRTPVMGSTGGAHRIESAKAGALTSTLFEPVDAASAPLHTNGAALSIGGDDDDVDVPPFMRR.

GTP-binding positions include 18 to 22 (GGGVN), 105 to 107 (GTG), Glu-136, Arg-140, and Asp-184.

It belongs to the FtsZ family. As to quaternary structure, homodimer. Polymerizes to form a dynamic ring structure in a strictly GTP-dependent manner. Interacts directly with several other division proteins.

It is found in the cytoplasm. Its function is as follows. Essential cell division protein that forms a contractile ring structure (Z ring) at the future cell division site. The regulation of the ring assembly controls the timing and the location of cell division. One of the functions of the FtsZ ring is to recruit other cell division proteins to the septum to produce a new cell wall between the dividing cells. Binds GTP and shows GTPase activity. The sequence is that of Cell division protein FtsZ from Mycobacterium leprae (strain TN).